The chain runs to 467 residues: Keratin, type 1 cytoskeletal 11 (467 aa).

Residues 1 to 100 form a head region; sequence MSYSSFSIAQ…GGTDFLLGTS (100 aa). Residues 12–30 are compositionally biased toward low complexity; that stretch reads SRVPSLSGTRSSSSYSLKS. Positions 12–32 are disordered; sequence SRVPSLSGTRSSSSYSLKSDL. The segment at 101–137 is coil 1A; the sequence is GKEAMQNLNDRLADYLARVRSLEDRNRELEQKIREWY. The IF rod domain maps to 101 to 413; sequence GKEAMQNLND…TLLEGDAGRS (313 aa). Residues 138 to 156 are linker 1; it reads EKQGAGTKRKDFSHYFKII. The interval 157 to 248 is coil 1B; that stretch reads ADLQNQINAG…SHDEDMKALR (92 aa). Residues 249-268 are linker 12; it reads SQLGGQVNVEVDAAPAEDLT. The coil 2 stretch occupies residues 269-416; sequence KKLEIIRQRY…EGDAGRSHSS (148 aa). The segment at 409–430 is disordered; the sequence is DAGRSHSSSHLSSTVSKDKVPV. Positions 417–463 are tail; the sequence is SHLSSTVSKDKVPVSSPNVITKVRTIVEEKINGQVISKKEYEGSPDQ.

The protein belongs to the intermediate filament family. Heterotetramer of two type I and two type II keratins. In terms of tissue distribution, expressed in the outermost cell layers of skin epidermis (at protein level).

In Protopterus aethiopicus (Marbled lungfish), this protein is Keratin, type 1 cytoskeletal 11.